Reading from the N-terminus, the 237-residue chain is DNA replication inhibitor toxin SocB (237 aa).

As to quaternary structure, interacts with cognate antitoxin SocA and with beta sliding clamp (dnaN). Degraded by ClpXP, recognition of SocB by ClpX requires SocA.

It localises to the cytoplasm. In terms of biological role, toxic component of an atypical type II toxin-antitoxin (TA) system. Upon overexpression in the absence of its cognate antitoxin SocA, leads to inhibition of colony formation, cellular filamentation, incomplete DNA replication and induction of the SOS response. Exercises toxicity by binding the beta sliding clamp (dnaN), blocking DNA replication and leading to premature replication fork collapse and incomplete cell division. Unlike most type II TA systems, the SocB toxin is unstable and targeted by its cognate antitoxin SocA for degradation by ClpXP. Not toxic upon expression in E.coli. This Caulobacter vibrioides (strain NA1000 / CB15N) (Caulobacter crescentus) protein is DNA replication inhibitor toxin SocB.